A 273-amino-acid polypeptide reads, in one-letter code: Ribosomal RNA small subunit methyltransferase A (273 aa).

S-adenosyl-L-methionine is bound by residues N18, L20, G45, E66, D91, and N113.

This sequence belongs to the class I-like SAM-binding methyltransferase superfamily. rRNA adenine N(6)-methyltransferase family. RsmA subfamily.

Its subcellular location is the cytoplasm. The enzyme catalyses adenosine(1518)/adenosine(1519) in 16S rRNA + 4 S-adenosyl-L-methionine = N(6)-dimethyladenosine(1518)/N(6)-dimethyladenosine(1519) in 16S rRNA + 4 S-adenosyl-L-homocysteine + 4 H(+). Functionally, specifically dimethylates two adjacent adenosines (A1518 and A1519) in the loop of a conserved hairpin near the 3'-end of 16S rRNA in the 30S particle. May play a critical role in biogenesis of 30S subunits. The protein is Ribosomal RNA small subunit methyltransferase A of Escherichia coli O157:H7.